The chain runs to 537 residues: Glucose-6-phosphate isomerase (537 aa).

Glutamate 355 acts as the Proton donor in catalysis. Residues histidine 386 and lysine 501 contribute to the active site.

The protein belongs to the GPI family.

It is found in the cytoplasm. The enzyme catalyses alpha-D-glucose 6-phosphate = beta-D-fructose 6-phosphate. It participates in carbohydrate biosynthesis; gluconeogenesis. Its pathway is carbohydrate degradation; glycolysis; D-glyceraldehyde 3-phosphate and glycerone phosphate from D-glucose: step 2/4. In terms of biological role, catalyzes the reversible isomerization of glucose-6-phosphate to fructose-6-phosphate. The polypeptide is Glucose-6-phosphate isomerase (Protochlamydia amoebophila (strain UWE25)).